Reading from the N-terminus, the 328-residue chain is Beta-agarase C (328 aa).

Positions 1 to 17 (MNLTKMAVFAASLFCLA) are cleaved as a signal peptide. The propeptide occupies 18-67 (CKNDIDTELEKKSIPESEIQKSEEKLPNEEELTPTDPDEETNKEETVTAN). Positions 26–45 (LEKKSIPESEIQKSEEKLPN) are enriched in basic and acidic residues. Positions 26–61 (LEKKSIPESEIQKSEEKLPNEEELTPTDPDEETNKE) are disordered. Over residues 46–59 (EEELTPTDPDEETN) the composition is skewed to acidic residues. Residues 70–328 (YDFTGNTPPP…WIHTYQLVEE (259 aa)) enclose the GH16 domain. Residues tryptophan 110, 119-129 (KAENSGVSDGK), 133-135 (KAT), glutamate 188, glutamate 193, and arginine 224 each bind substrate. Glutamate 188 functions as the Nucleophile in the catalytic mechanism. Glutamate 193 acts as the Proton donor in catalysis.

This sequence belongs to the glycosyl hydrolase 16 family.

The protein localises to the secreted. It catalyses the reaction Hydrolysis of (1-&gt;4)-beta-D-galactosidic linkages in agarose, giving the tetramer as the predominant product.. Its function is as follows. Cleaves the beta-1,4-linkages between beta-D-galactose and alpha-L-3,6-anhydro-galactose residues in agarose. Cleaves agarose in a random manner with retention of the anomeric-bond configuration, producing beta-anomers that give rise progressively to alpha-anomers when mutarotation takes place. The polypeptide is Beta-agarase C (agaC) (Zobellia galactanivorans (strain DSM 12802 / CCUG 47099 / CIP 106680 / NCIMB 13871 / Dsij)).